The chain runs to 149 residues: Calmodulin-like protein 3 (149 aa).

EF-hand domains follow at residues 8–43 (EQIAEFKEAFSLFDKDGDGSITTQELGTVMRSLGQN), 44–79 (PTEAELQGMVNEIDKDGNGTVDFPEFLTMMSRKMKD), 81–116 (DSEEEIREAFRVFDKDGNGFVSAAELRHVMTKLGEK), and 117–149 (LSDEEVDEMIQAADTDGDGQVNYEEFVHMLVSK). Ca(2+) is bound by residues Asp21, Asp23, Asp25, Ser27, Glu32, Asp57, Asp59, Asn61, Thr63, Glu68, Asp94, Asp96, Asn98, Glu105, Asp130, Asp132, Asp134, Gln136, and Glu141.

The protein belongs to the calmodulin family. Interacts with MYO10, the interaction is calcium-dependent and essential for MYO10 function in filopodial extension.

May function as a specific light chain of unconventional myosin-10 (MYO10), also enhances MYO10 translation, possibly by acting as a chaperone for the emerging MYO10 heavy chain protein. May compete with calmodulin by binding, with different affinities, to cellular substrates. The polypeptide is Calmodulin-like protein 3 (Calml3) (Mus musculus (Mouse)).